A 159-amino-acid polypeptide reads, in one-letter code: Large ribosomal subunit protein uL22 (159 aa).

The protein belongs to the universal ribosomal protein uL22 family. Part of the 50S ribosomal subunit.

Functionally, this protein binds specifically to 23S rRNA; its binding is stimulated by other ribosomal proteins, e.g. L4, L17, and L20. It is important during the early stages of 50S assembly. It makes multiple contacts with different domains of the 23S rRNA in the assembled 50S subunit and ribosome. In terms of biological role, the globular domain of the protein is located near the polypeptide exit tunnel on the outside of the subunit, while an extended beta-hairpin is found that lines the wall of the exit tunnel in the center of the 70S ribosome. The polypeptide is Large ribosomal subunit protein uL22 (Thermotoga sp. (strain RQ2)).